The primary structure comprises 211 residues: Large ribosomal subunit protein eL13 (211 aa).

At lysine 16 the chain carries N6-acetyllysine. A phosphoserine mark is found at serine 52, serine 77, and serine 106. Residues lysine 123 and lysine 145 each participate in a glycyl lysine isopeptide (Lys-Gly) (interchain with G-Cter in SUMO2) cross-link. Lysine 174 participates in a covalent cross-link: Glycyl lysine isopeptide (Lys-Gly) (interchain with G-Cter in SUMO1); alternate. Residues lysine 174 and lysine 177 each participate in a glycyl lysine isopeptide (Lys-Gly) (interchain with G-Cter in SUMO2); alternate cross-link. Lysine 177 is subject to N6-acetyllysine; alternate.

It belongs to the eukaryotic ribosomal protein eL13 family. In terms of assembly, component of the large ribosomal subunit.

It is found in the cytoplasm. Its function is as follows. Component of the large ribosomal subunit. The ribosome is a large ribonucleoprotein complex responsible for the synthesis of proteins in the cell. The protein is Large ribosomal subunit protein eL13 (Rpl13) of Mus musculus (Mouse).